We begin with the raw amino-acid sequence, 477 residues long: Cytochrome c-552 (477 aa).

An N-terminal signal peptide occupies residues 1–26 (MVRISTSISYLWGMVASLFLMMPAYS). Residue His-94 participates in heme c binding. Heme-binding residues include Cys-122, Cys-125, and Lys-126. Heme c is bound by residues Cys-160, Cys-163, His-164, Cys-209, Cys-212, and His-213. Ca(2+) contacts are provided by Glu-215, Tyr-216, Lys-261, and Gln-263. Tyr-216 is a substrate binding site. His-264 is a binding site for substrate. Residues His-275, Cys-282, Cys-285, His-286, His-301, Cys-314, Cys-317, His-318, and His-393 each contribute to the heme c site.

It belongs to the cytochrome c-552 family. The cofactor is Ca(2+). It depends on heme c as a cofactor.

The protein resides in the periplasm. It carries out the reaction 6 Fe(III)-[cytochrome c] + NH4(+) + 2 H2O = 6 Fe(II)-[cytochrome c] + nitrite + 8 H(+). It participates in nitrogen metabolism; nitrate reduction (assimilation). Catalyzes the reduction of nitrite to ammonia, consuming six electrons in the process. In Pectobacterium carotovorum subsp. carotovorum (strain PC1), this protein is Cytochrome c-552.